Reading from the N-terminus, the 273-residue chain is Flagellin FljM (273 aa).

Belongs to the bacterial flagellin family. As to quaternary structure, in C.crescentus, the flagellar filament is composed of multiple flagellins of 29 kDa; 27 kDa and 25 kDa.

Its subcellular location is the secreted. The protein resides in the bacterial flagellum. Flagellin is the subunit protein which polymerizes to form the filaments of bacterial flagella. In Caulobacter vibrioides (strain ATCC 19089 / CIP 103742 / CB 15) (Caulobacter crescentus), this protein is Flagellin FljM (fljM).